The chain runs to 373 residues: D-alanine--D-alanine ligase (373 aa).

In terms of domain architecture, ATP-grasp spans 165 to 369 (KRLAREAGIP…FGDLVSALIA (205 aa)). Residue 192–247 (KERLGLPVFVKPARGGSSIGISKVDSWEEFDAAIDLAFSNDNKVIVEAMIHGAEVE) participates in ATP binding. Mg(2+)-binding residues include D324, E336, and N338.

This sequence belongs to the D-alanine--D-alanine ligase family. Mg(2+) serves as cofactor. Mn(2+) is required as a cofactor.

The protein localises to the cytoplasm. The catalysed reaction is 2 D-alanine + ATP = D-alanyl-D-alanine + ADP + phosphate + H(+). Its pathway is cell wall biogenesis; peptidoglycan biosynthesis. Its function is as follows. Cell wall formation. The sequence is that of D-alanine--D-alanine ligase from Corynebacterium jeikeium (strain K411).